Consider the following 510-residue polypeptide: ATP synthase subunit alpha, chloroplastic (510 aa).

170 to 177 is a binding site for ATP; the sequence is GDRQTGKT.

The protein belongs to the ATPase alpha/beta chains family. As to quaternary structure, F-type ATPases have 2 components, CF(1) - the catalytic core - and CF(0) - the membrane proton channel. CF(1) has five subunits: alpha(3), beta(3), gamma(1), delta(1), epsilon(1). CF(0) has four main subunits: a, b, b' and c.

The protein resides in the plastid. The protein localises to the chloroplast thylakoid membrane. It carries out the reaction ATP + H2O + 4 H(+)(in) = ADP + phosphate + 5 H(+)(out). Its function is as follows. Produces ATP from ADP in the presence of a proton gradient across the membrane. The alpha chain is a regulatory subunit. The protein is ATP synthase subunit alpha, chloroplastic of Phaseolus vulgaris (Kidney bean).